The primary structure comprises 506 residues: ATP synthase subunit alpha (506 aa).

170–177 (GDRQTGKT) contacts ATP.

Belongs to the ATPase alpha/beta chains family. As to quaternary structure, F-type ATPases have 2 components, CF(1) - the catalytic core - and CF(0) - the membrane proton channel. CF(1) has five subunits: alpha(3), beta(3), gamma(1), delta(1), epsilon(1). CF(0) has four main subunits: a(1), b(1), b'(1) and c(9-12).

It localises to the cellular thylakoid membrane. The catalysed reaction is ATP + H2O + 4 H(+)(in) = ADP + phosphate + 5 H(+)(out). Its function is as follows. Produces ATP from ADP in the presence of a proton gradient across the membrane. The alpha chain is a regulatory subunit. This Synechococcus sp. (strain CC9311) protein is ATP synthase subunit alpha.